Reading from the N-terminus, the 1275-residue chain is Surfactin synthase subunit 3 (1275 aa).

In terms of domain architecture, Carrier spans 968–1043 (GPRNEMEETI…GISAYLKNGG (76 aa)). Ser1003 is subject to O-(pantetheine 4'-phosphoryl)serine. The interval 1059–1271 (QIIFAFPPVL…ILLEFLNTQT (213 aa)) is thioesterase. Catalysis depends on residues Ser1120, Asp1147, and His1247.

It belongs to the ATP-dependent AMP-binding enzyme family. The cofactor is pantetheine 4'-phosphate.

It participates in antibiotic biosynthesis; surfactin biosynthesis. In terms of biological role, probably activates a leucine. This Bacillus subtilis (strain 168) protein is Surfactin synthase subunit 3 (srfAC).